The primary structure comprises 60 residues: Large ribosomal subunit protein bL32 (60 aa).

The tract at residues 1-43 is disordered; it reads MAVQQNKKSPSKRGMHRSHDALTNPPLAIEPTTGEIHLRHHIS.

The protein belongs to the bacterial ribosomal protein bL32 family.

The polypeptide is Large ribosomal subunit protein bL32 (Nitrosomonas europaea (strain ATCC 19718 / CIP 103999 / KCTC 2705 / NBRC 14298)).